Here is a 451-residue protein sequence, read N- to C-terminus: Jacalin-related lectin 35 (451 aa).

Position 2 is an N-acetylalanine (alanine 2). Jacalin-type lectin domains lie at 2-143 (AKKL…YIIP), 156-297 (LTKL…YIIP), and 306-448 (SNTI…NVAP).

It belongs to the jacalin lectin family. As to quaternary structure, component of the PYK10 complex, at least composed of PYK10/BGLU23, BGLU21, BGLU22, JAL22, JAL23, PBP1/JAL30, PBP2/JAL31, JAL32, JAL33, JAL34, JAL35, GLL22 and GLL23.

This is Jacalin-related lectin 35 (JAL35) from Arabidopsis thaliana (Mouse-ear cress).